Consider the following 387-residue polypeptide: Chaperone protein DnaJ (387 aa).

A J domain is found at 6-70 (DYYETLGVSR…QKRAAYDQYG (65 aa)). A CR-type zinc finger spans residues 143 to 225 (GKDTKISYDR…CHGTGHEQER (83 aa)). The Zn(2+) site is built by C156, C159, C173, C176, C199, C202, C213, and C216. CXXCXGXG motif repeat units lie at residues 156 to 163 (CHTCNGSG), 173 to 180 (CHKCHGSG), 199 to 206 (CDVCGGTG), and 213 to 220 (CPTCHGTG).

Belongs to the DnaJ family. Homodimer. Zn(2+) serves as cofactor.

Its subcellular location is the cytoplasm. Participates actively in the response to hyperosmotic and heat shock by preventing the aggregation of stress-denatured proteins and by disaggregating proteins, also in an autonomous, DnaK-independent fashion. Unfolded proteins bind initially to DnaJ; upon interaction with the DnaJ-bound protein, DnaK hydrolyzes its bound ATP, resulting in the formation of a stable complex. GrpE releases ADP from DnaK; ATP binding to DnaK triggers the release of the substrate protein, thus completing the reaction cycle. Several rounds of ATP-dependent interactions between DnaJ, DnaK and GrpE are required for fully efficient folding. Also involved, together with DnaK and GrpE, in the DNA replication of plasmids through activation of initiation proteins. This chain is Chaperone protein DnaJ, found in Lacticaseibacillus paracasei (strain ATCC 334 / BCRC 17002 / CCUG 31169 / CIP 107868 / KCTC 3260 / NRRL B-441) (Lactobacillus paracasei).